A 582-amino-acid polypeptide reads, in one-letter code: MHNDKDLSTWQTFRRLWPTIAPFKAGLIVAGIALILNAASDTFMLSLLKPLLDDGFGKTDRSVLLWMPLVVIGLMILRGITSYISSYCISWVSGKVVMTMRRRLFGHMMGMPVAFFDKQSTGTLLSRITYDSEQVASSSSGALITVVREGASIIGLFIMMFYYSWQLSIILVVLAPIVSIAIRVVSKRFRSISKNMQNTMGQVTTSAEQMLKGHKEVLIFGGQEVETKRFDKVSNKMRLQGMKMVSASSISDPIIQLIASLALAFVLYAASFPSVMDSLTAGTITVVFSSMIALMRPLKSLTNVNAQFQRGMAACQTLFAILDSEQEKDEGKRVIDRATGDLEFRNVTFTYPGREVPALRNINLKIPAGKTVALVGRSGSGKSTIASLITRFYDIDEGHILMDGHDLREYTLASLRNQVALVSQNVHLFNDTVANNIAYARTEEYSREQIEEAARMAYAMDFINKMDNGLDTIIGENGVLLSGGQRQRIAIARALLRDSPILILDEATSALDTESERAIQAALDELQKNRTSLVIAHRLSTIEQADEIVVVEDGIIVERGTHSELLAQHGVYAQLHKMQFGQ.

5 consecutive transmembrane segments (helical) span residues 16–36 (LWPT…ALIL), 64–84 (LLWM…TSYI), 153–173 (IIGL…ILVV), 253–273 (PIIQ…ASFP), and 275–295 (VMDS…IALM). Positions 28–310 (IVAGIALILN…LTNVNAQFQR (283 aa)) constitute an ABC transmembrane type-1 domain. Residues 342 to 578 (LEFRNVTFTY…HGVYAQLHKM (237 aa)) enclose the ABC transporter domain. ATP is bound at residue 376 to 383 (GRSGSGKS).

It belongs to the ABC transporter superfamily. Lipid exporter (TC 3.A.1.106) family. Homodimer.

The protein resides in the cell inner membrane. It catalyses the reaction ATP + H2O + lipid A-core oligosaccharideSide 1 = ADP + phosphate + lipid A-core oligosaccharideSide 2.. In terms of biological role, involved in lipopolysaccharide (LPS) biosynthesis. Translocates lipid A-core from the inner to the outer leaflet of the inner membrane. Transmembrane domains (TMD) form a pore in the inner membrane and the ATP-binding domain (NBD) is responsible for energy generation. The chain is ATP-dependent lipid A-core flippase from Salmonella choleraesuis (strain SC-B67).